Consider the following 202-residue polypeptide: MASSLALKRFLSSGLLSSSFLRPVASSASRSFNTNAMRQYDQHSDDRNVDVYRHSFPRTRRDDLLLSDVFDPFSPPRSLSQVLNMVDLLTDNPVLSAASRRGWDARETEDALFLRLDMPGLGKEDVKISVEQNTLTIKGEEGAKESEEKEKSGRRFSSRIDLPEKLYKIDVIKAEMKNGVLKVTVPKMKEEERNNVINVKVD.

The N-terminal 31 residues, M1–S31, are a transit peptide targeting the mitochondrion. The region spanning V94–D202 is the sHSP domain.

It belongs to the small heat shock protein (HSP20) family.

Its subcellular location is the mitochondrion. The protein is Heat shock 22 kDa protein, mitochondrial (HSP22) of Pisum sativum (Garden pea).